We begin with the raw amino-acid sequence, 266 residues long: tRNA pseudouridine synthase A (266 aa).

The active-site Nucleophile is aspartate 52. Position 113 (tyrosine 113) interacts with substrate.

Belongs to the tRNA pseudouridine synthase TruA family. In terms of assembly, homodimer.

It carries out the reaction uridine(38/39/40) in tRNA = pseudouridine(38/39/40) in tRNA. In terms of biological role, formation of pseudouridine at positions 38, 39 and 40 in the anticodon stem and loop of transfer RNAs. In Agrobacterium fabrum (strain C58 / ATCC 33970) (Agrobacterium tumefaciens (strain C58)), this protein is tRNA pseudouridine synthase A.